A 218-amino-acid chain; its full sequence is Uracil-DNA glycosylase (218 aa).

The Proton acceptor role is filled by D68.

The protein belongs to the uracil-DNA glycosylase (UDG) superfamily. UNG family. In terms of assembly, homodimer. Interacts with protein OPG148. Component of the Uracil-DNA glycosylase(UDG)-OPG148-polymerase complex; OPG148 and UDG form a heterodimeric processivity factor that associates with OPG71 to form the processive polymerase holoenzyme.

The catalysed reaction is Hydrolyzes single-stranded DNA or mismatched double-stranded DNA and polynucleotides, releasing free uracil.. Its function is as follows. Plays an essential role in viral replication as a component of the DNA polymerase processivity factor. Excises uracil residues from the DNA which can arise as a result of misincorporation of dUMP residues by DNA polymerase or due to deamination of cytosine. The protein is Uracil-DNA glycosylase (OPG116) of Bos taurus (Bovine).